Here is a 137-residue protein sequence, read N- to C-terminus: Probable S-adenosyl-L-methionine-binding protein MTH_1797 (137 aa).

Positions 8 to 137 constitute a TsaA-like domain; sequence IRPVGVVRSP…YYEDIDSLGF (130 aa). Residues 25–27, 63–64, Arg-87, Leu-97, and 117–120 each bind S-adenosyl-L-methionine; these read PAQ, HL, and LDGS.

It belongs to the tRNA methyltransferase O family.

This chain is Probable S-adenosyl-L-methionine-binding protein MTH_1797, found in Methanothermobacter thermautotrophicus (strain ATCC 29096 / DSM 1053 / JCM 10044 / NBRC 100330 / Delta H) (Methanobacterium thermoautotrophicum).